The primary structure comprises 1250 residues: Protein suppressor of variegation 3-7 (1250 aa).

Disordered stretches follow at residues 107-148 (LNNP…HSYH) and 160-186 (HDPG…GGMR). A compositionally biased stretch (polar residues) spans 132–141 (STKTEPSSDA). Residues 164-175 (DSQDDDDEDDES) are compositionally biased toward acidic residues. A phosphoserine mark is found at S165, S175, and S176. C2H2-type zinc fingers lie at residues 217–236 (CLYC…IQQH), 319–343 (CRIC…TKGH), 425–446 (CTLC…TRAH), and 487–512 (CSVC…SEKH). Positions 343–354 (HMEALRNLDSDK) are enriched in basic and acidic residues. The segment at 343 to 398 (HMEALRNLDSDKRSRKRKRSKSNSVTNSGGDEAEREKESEPEVGPEDAQDTPVVMM) is disordered. The interval 525–564 (VGSADGRGGDNMDEEEAAASDQAQSSQTDDSEDNDDDNWS) is disordered. A compositionally biased stretch (low complexity) spans 543–552 (ASDQAQSSQT). Positions 553–563 (DDSEDNDDDNW) are enriched in acidic residues. The segment at 605 to 629 (QICKFCRVRFHNEAAKARHELSARH) adopts a C2H2-type 5 zinc-finger fold. The segment at 642–684 (KLHQGTNTQTKHNAQDDEESQEQDEEYGEEEEDAEEDSQSNFD) is disordered. Positions 657–679 (DDEESQEQDEEYGEEEEDAEEDS) are enriched in acidic residues. C2H2-type zinc fingers lie at residues 737–761 (CKLC…TSRH) and 829–852 (CRVC…SRKH). A compositionally biased stretch (basic and acidic residues) spans 851-860 (KHVENKERQR). The interval 851–915 (KHVENKERQR…PLAKRSRRSM (65 aa)) is disordered. Phosphoserine occurs at positions 871 and 873. A compositionally biased stretch (basic and acidic residues) spans 879–897 (DAERQESGMDKESENDMSV). Residue S975 is modified to Phosphoserine. Residues 987–1026 (RHVMDLFFDSISPTMKSLPPDLAAEGKSKIMQLVCSLELR) form the BESS domain. Low complexity predominate over residues 1032–1055 (ATTPTPATVSASSKWPSSTTVTPV). Disordered regions lie at residues 1032 to 1060 (ATTP…TPPA), 1079 to 1116 (TTPH…NGSA), 1154 to 1180 (QSRT…ADLS), and 1205 to 1236 (NTPQ…NGCQ). 2 stretches are compositionally biased toward polar residues: residues 1079–1091 (TTPH…QNNN) and 1104–1114 (GASSAQVTING). Low complexity predominate over residues 1206–1224 (TPQMQQPQQAQASITSSTP).

Interacts with Su(var)39 through the BESS domain.

The protein localises to the nucleus. Functionally, dose-limiting factor in position-effect variegation, the inactivation in some cells of a gene translocated next to heterochromatin. It could play a role in chromosome condensation. This is Protein suppressor of variegation 3-7 (Su(var)3-7) from Drosophila melanogaster (Fruit fly).